The primary structure comprises 517 residues: uncharacterized protein (517 aa).

Disordered stretches follow at residues 16–148 (KDES…TITK), 156–175 (VNKEINNNNNNNNNNNNTTT), and 216–351 (KLEK…EENE). The span at 48–75 (NNNNNNNNTTTTNNNTNNSNTSTSNNSK) shows a compositional bias: low complexity. The segment covering 84–112 (FDDDDDDGDEEDEEEEDDDDDDDDDDDET) has biased composition (acidic residues). Over residues 127-143 (QPQPQPQPQPQPQPPIK) the composition is skewed to pro residues. Positions 236 to 252 (VSSTLSNSFDPNIIHNQ) are enriched in polar residues. Positions 254–266 (SPPPPPISIPIPL) are enriched in pro residues. Low complexity-rich tracts occupy residues 271–320 (NLNN…NSNI) and 327–347 (SSSMVNNVNNNSSDNSSSNNN). Residues 340 to 452 (DNSSSNNNEE…HQNQQNSMNN (113 aa)) adopt a coiled-coil conformation.

The protein belongs to the ENTR1 family.

This is an uncharacterized protein from Dictyostelium discoideum (Social amoeba).